A 39-amino-acid chain; its full sequence is Photosystem II reaction center protein J (39 aa).

A helical transmembrane segment spans residues 7 to 27; sequence IPLWLIGTIVGILVIGLIGIY.

It belongs to the PsbJ family. In terms of assembly, PSII is composed of 1 copy each of membrane proteins PsbA, PsbB, PsbC, PsbD, PsbE, PsbF, PsbH, PsbI, PsbJ, PsbK, PsbL, PsbM, PsbT, PsbX, PsbY, PsbZ, Psb30/Ycf12, at least 3 peripheral proteins of the oxygen-evolving complex and a large number of cofactors. It forms dimeric complexes.

The protein resides in the plastid. The protein localises to the chloroplast thylakoid membrane. Functionally, one of the components of the core complex of photosystem II (PSII). PSII is a light-driven water:plastoquinone oxidoreductase that uses light energy to abstract electrons from H(2)O, generating O(2) and a proton gradient subsequently used for ATP formation. It consists of a core antenna complex that captures photons, and an electron transfer chain that converts photonic excitation into a charge separation. This is Photosystem II reaction center protein J from Welwitschia mirabilis (Tree tumbo).